The primary structure comprises 3993 residues: Intermembrane lipid transfer protein VPS13B (3993 aa).

The region spanning Leu2–Ser102 is the Chorein N-terminal domain. A disordered region spans residues His100 to Pro133. The span at Cys103–Ser119 shows a compositional bias: polar residues. Phosphoserine occurs at positions 413, 998, 1001, and 1032. Disordered stretches follow at residues Ser1262–Asp1303, Asp1616–Ser1637, and Thr1735–Ile1770. Polar residues predominate over residues Val1264 to Asp1291. A compositionally biased stretch (basic and acidic residues) spans Glu1739–Thr1750. Residues Ala1756–Ile1770 are compositionally biased toward polar residues. Residue Ser1789 is modified to Phosphoserine. Residues His2048–Asp2067 form a disordered region. An SHR-BD domain is found at His2604–Ser2683. Positions Ala3880–Ser3993 are localizes the protein to the Golgi apparatus.

The protein belongs to the VPS13 family. As to quaternary structure, interacts with STX6. Interacts with STX12 (via N-terminus). Interacts with RAB6A isoform 1 (GTP-bound) and isoform 2 (GTP-bound). Interacts with RAB6B (GTP-bound). In terms of tissue distribution, ubiquitously expressed in all examined tissues.

It is found in the recycling endosome membrane. The protein localises to the cytoplasmic vesicle. Its subcellular location is the secretory vesicle. It localises to the acrosome membrane. The protein resides in the golgi apparatus. It is found in the cis-Golgi network membrane. The protein localises to the endoplasmic reticulum-Golgi intermediate compartment membrane. Its subcellular location is the trans-Golgi network membrane. It localises to the early endosome membrane. The protein resides in the lysosome membrane. Its function is as follows. Mediates the transfer of lipids between membranes at organelle contact sites. Binds phosphatidylinositol 3-phosphate. Functions as a tethering factor in the slow endocytic recycling pathway, to assist traffic between early and recycling endosomes. Involved in the transport of proacrosomal vesicles to the nuclear dense lamina (NDL) during spermatid development. Plays a role in the assembly of the Golgi apparatus, possibly by mediating trafficking to the Golgi membrane. Plays a role in the development of the nervous system, and may be required for neuron projection development. May also play a role during adipose tissue development. Required for maintenance of the ocular lens. Required for proper organization of the Golgi. The chain is Intermembrane lipid transfer protein VPS13B from Mus musculus (Mouse).